The chain runs to 190 residues: CASP-like protein 2U2 (190 aa).

Topologically, residues 1 to 10 (MGEKMQGFQG) are cytoplasmic. A helical membrane pass occupies residues 11 to 31 (WSIGIRFLTSCVSIASLILLL). Residues 32–59 (KSKQTVQVSVGLDYVTQQVKYSDTSAFV) are Extracellular-facing. The helical transmembrane segment at 60-80 (YLVFSDILVAVYCIVVLVGLI) threads the bilayer. Topologically, residues 81-94 (PAALGKSHPGKAGQ) are cytoplasmic. Residues 95 to 115 (WAIFIFDQVLAYVLLAAASSA) traverse the membrane as a helical segment. Residues 116–144 (TEVAYLADKGMAKTSWEAVCPRFAHFCHT) are Extracellular-facing. A helical transmembrane segment spans residues 145 to 165 (VMASISLSFVAVLLLALLAVV). Residues 166 to 190 (SASGLFGRFYRRPLFAVKMRHNTLI) are Cytoplasmic-facing.

Belongs to the Casparian strip membrane proteins (CASP) family. In terms of assembly, homodimer and heterodimers.

It localises to the cell membrane. The chain is CASP-like protein 2U2 from Pteridium aquilinum subsp. aquilinum (Bracken fern).